The primary structure comprises 115 residues: Ribonuclease P protein component (115 aa).

The protein belongs to the RnpA family. As to quaternary structure, consists of a catalytic RNA component (M1 or rnpB) and a protein subunit.

The enzyme catalyses Endonucleolytic cleavage of RNA, removing 5'-extranucleotides from tRNA precursor.. RNaseP catalyzes the removal of the 5'-leader sequence from pre-tRNA to produce the mature 5'-terminus. It can also cleave other RNA substrates such as 4.5S RNA. The protein component plays an auxiliary but essential role in vivo by binding to the 5'-leader sequence and broadening the substrate specificity of the ribozyme. The chain is Ribonuclease P protein component from Symbiobacterium thermophilum (strain DSM 24528 / JCM 14929 / IAM 14863 / T).